The chain runs to 310 residues: Bis(hydroxyethyl) terephthalate hydrolase (310 aa).

Residues M1–A48 constitute a signal peptide (tat-type signal). Residue F111 participates in bis(2-hydroxyethyl) terephthalate binding. S179 acts as the Nucleophile in catalysis. Residues M180 and W204 each coordinate bis(2-hydroxyethyl) terephthalate. Residues D225 and H257 each act as charge relay system in the active site. C290 and C306 form a disulfide bridge.

The protein belongs to the AB hydrolase superfamily. In terms of processing, predicted to be exported by the Tat system. The position of the signal peptide cleavage has not been experimentally proven.

Its subcellular location is the secreted. The enzyme catalyses bis(2-hydroxyethyl) terephthalate + H2O = 4-[(2-hydroxyethoxy)carbonyl]benzoate + ethylene glycol + H(+). Catalyzes the degradation of bis(hydroxyethyl) terephthalate (BHET), a derived-oligomer of the plastic poly(ethylene terephthalate) (PET), hydrolyzing BHET to mono(2-hydroxyethyl) terephthalate (MHET). Shows no activity against PET. The protein is Bis(hydroxyethyl) terephthalate hydrolase of Streptomyces coelicolor (strain ATCC BAA-471 / A3(2) / M145).